Consider the following 310-residue polypeptide: N-acetyl-gamma-glutamyl-phosphate reductase (310 aa).

The active site involves cysteine 117.

It belongs to the NAGSA dehydrogenase family. Type 2 subfamily.

It localises to the cytoplasm. The catalysed reaction is N-acetyl-L-glutamate 5-semialdehyde + phosphate + NADP(+) = N-acetyl-L-glutamyl 5-phosphate + NADPH + H(+). The protein operates within amino-acid biosynthesis; L-arginine biosynthesis; N(2)-acetyl-L-ornithine from L-glutamate: step 3/4. Functionally, catalyzes the NADPH-dependent reduction of N-acetyl-5-glutamyl phosphate to yield N-acetyl-L-glutamate 5-semialdehyde. This chain is N-acetyl-gamma-glutamyl-phosphate reductase, found in Rhizobium etli (strain ATCC 51251 / DSM 11541 / JCM 21823 / NBRC 15573 / CFN 42).